The following is a 1033-amino-acid chain: DNA polymerase I A, chloroplastic (1033 aa).

Positions 1–11 (MAVAPPLPPAP) are enriched in pro residues. Disordered stretches follow at residues 1–32 (MAVAPPLPPAPARQLRRWKGSSPRPPPWLSSP) and 104–142 (TNGTTPLRVGNLRHDPSEDIRSSNYPSLYNQRERGPSNS). The transit peptide at 1 to 55 (MAVAPPLPPAPARQLRRWKGSSPRPPPWLSSPFRRTRYLSRPAFAAGGRQDYSPS) directs the protein to the chloroplast. Residues 115 to 124 (LRHDPSEDIR) show a composition bias toward basic and acidic residues. Polar residues predominate over residues 125-142 (SSNYPSLYNQRERGPSNS). One can recognise a 3'-5' exonuclease domain in the interval 321-482 (FGNGKTCIWV…LYESLKNKLE (162 aa)). A polymerase region spans residues 696-1030 (CHAIAALCEV…VDAKYAKSWY (335 aa)).

It belongs to the DNA polymerase type-A family. Expressed in shoot apical meristem, root apical meristem, leaf primordia and the marginal meristem.

Its subcellular location is the plastid. It localises to the chloroplast. It carries out the reaction DNA(n) + a 2'-deoxyribonucleoside 5'-triphosphate = DNA(n+1) + diphosphate. Inhibited by dideoxythymidine-triphosphate (ddTTP), but not by aphidicolin and N-ethylmaleimide. Functionally, in addition to polymerase activity, this DNA polymerase exhibits 5'-3' exonuclease activity. May be required for DNA replication and accumulation in plastids. The chain is DNA polymerase I A, chloroplastic from Oryza sativa subsp. japonica (Rice).